A 122-amino-acid chain; its full sequence is Putative iron-sulfur cluster insertion protein ErpA (122 aa).

Residues Cys50, Cys114, and Cys116 each contribute to the iron-sulfur cluster site.

It belongs to the HesB/IscA family. Homodimer. The cofactor is iron-sulfur cluster.

In terms of biological role, required for insertion of 4Fe-4S clusters. The protein is Putative iron-sulfur cluster insertion protein ErpA of Burkholderia mallei (strain NCTC 10247).